The sequence spans 7119 residues: Replicase polyprotein 1ab (7119 aa).

Positions 25 to 151 (RSDHVACTVP…EYTFLLRKNG (127 aa)) constitute a CoV Nsp1 globular domain. The region spanning 167–195 (TPYVEILDDLEADPTGKYSQNLLKKLIGG) is the BetaCoV Nsp1 C-terminal domain. The CoV Nsp2 N-terminal domain occupies 197–472 (CIPIDQYMCG…WDKVVETANL (276 aa)). Residues cysteine 339, cysteine 342, cysteine 358, and cysteine 360 each coordinate Zn(2+). The segment at 339 to 360 (CNACGRGTWCTGNAIQGFACDC) is C4. In terms of domain architecture, CoV Nsp2 middle spans 478–712 (QRSLNFCQQF…LDIMSKAMKL (235 aa)). The 134-residue stretch at 714–847 (HTNVSWAGTK…VSTLFRLKGG (134 aa)) folds into the CoV Nsp2 C-terminal domain. Residues 851 to 960 (KKVTFGDVNT…MTFSINPVED (110 aa)) enclose the Ubiquitin-like 1 domain. Macro domains follow at residues 1152 to 1321 (DLSK…KPDG) and 1322 to 1446 (LVYS…AIQT). A DPUP domain is found at 1446-1519 (TPETAFINNV…LEACRAYLTS (74 aa)). Positions 1524 to 1579 (QVNIEVLVTIDGVNFRTVILNDTTTFRKQLGATFYKGVDISDAFPTVKMGGESLFV) constitute a Ubiquitin-like 2 domain. Positions 1593–1864 (EYYGTSDVTF…KVEVNPDLSN (272 aa)) constitute a Peptidase C16 domain. Cysteine 1634 acts as the For PL-PRO activity in catalysis. Cysteine 1714, cysteine 1717, cysteine 1749, and cysteine 1751 together coordinate Zn(2+). Residues 1714–1751 (CTVCGIRDIEYTGMRACVYAGVNSMEELQSVFNETCVC) form a C4-type zinc finger. Residues histidine 1800 and aspartate 1815 each act as for PL-PRO activity in the active site. The region spanning 1878-1995 (TIKYSPATIL…QLYDVAPIVL (118 aa)) is the Nucleic acid-binding domain. One can recognise a G2M domain in the interval 2012–2133 (HNVPVVDDVP…AKITVTATTA (122 aa)). 3 helical membrane passes run 2112–2132 (VLLG…TATT), 2145–2165 (FVVN…LFFL), and 2222–2242 (LFLL…LVLF). The tract at residues 2112–2395 (VLLGASSLFA…VTHIPLHGLV (284 aa)) is HD1. The 3Ecto domain occupies 2259 to 2325 (LAIYKEVRSY…LQMLQTHITS (67 aa)). 2 disulfide bridges follow: cysteine 2275–cysteine 2303 and cysteine 2293–cysteine 2300. 3 helical membrane-spanning segments follow: residues 2326–2346 (YVLN…YVLY), 2350–2370 (FNVL…SAFV), and 2375–2395 (YNYI…HGLV). A Y1 region spans residues 2409 to 2499 (KFYSHVINGC…TLRRLIKPTD (91 aa)). In terms of domain architecture, CoV Nsp3 Y spans 2409-2782 (KFYSHVINGC…LSVKFSATKI (374 aa)). Residues histidine 2413, cysteine 2418, cysteine 2423, cysteine 2426, cysteine 2459, histidine 2462, cysteine 2466, and cysteine 2469 each coordinate Zn(2+). Residues 2413-2426 (HVINGCKDTACLLC) form a ZF1 region. Positions 2459 to 2469 (CCKHNWNCVEC) are ZF2. A Y2 region spans residues 2500–2598 (QSHYYVDSVV…LVDVNLVTTV (99 aa)). The segment at 2500–2782 (QSHYYVDSVV…LSVKFSATKI (283 aa)) is coV-Y. Residues 2599 to 2681 (GDSREIAIKM…DALQYAHKND (83 aa)) are Y3. Residues 2682–2782 (IQLTTECYNN…LSVKFSATKI (101 aa)) form a Y4 region. Transmembrane regions (helical) follow at residues 2800–2820 (GYCI…FCLP), 3072–3092 (STSL…FYYI), 3105–3125 (CAVV…FIVA), and 3149–3169 (AFIM…IWML). The segment at 2800-3169 (GYCILTLFVF…FGAVVPIWML (370 aa)) is HD2. Residues 3195–3291 (VFTDGKLNCS…NCSVTSSVLQ (97 aa)) enclose the Nsp4C domain. In terms of domain architecture, Peptidase C30 spans 3292-3597 (SGLVKMSAPS…NMQVMGVVMQ (306 aa)). Active-site for 3CL-PRO activity residues include histidine 3332 and cysteine 3439. 7 consecutive transmembrane segments (helical) span residues 3603–3623 (ISYG…VSVM), 3637–3657 (TIPT…MFTV), 3662–3682 (TFMS…NIVY), 3707–3727 (RTTH…AIIV), 3735–3755 (MSNL…YVIG), 3784–3804 (LAKF…FILP), and 3808–3828 (LVLL…GVFS). Positions 3603 to 3828 (ISYGFIHWLI…MCTMYFGVFS (226 aa)) are HD3. The 83-residue stretch at 3890–3972 (SKLTDLKCTS…DLFENSSVLQ (83 aa)) folds into the RdRp Nsp7 cofactor domain. Positions 3973–4171 (ATLTEFSHLA…RSSSSAVKLQ (199 aa)) constitute a RdRp Nsp8 cofactor domain. Residues 4172–4281 (NNEIHPKGLK…GHIAATVRLQ (110 aa)) form the Nsp9 ssRNA-binding domain. One can recognise an ExoN/MTase coactivator domain in the interval 4282–4420 (AGANTEFASN…DALRNNTVPQ (139 aa)). Cysteine 4355, cysteine 4358, histidine 4364, cysteine 4371, cysteine 4397, cysteine 4400, cysteine 4408, and cysteine 4410 together coordinate Zn(2+). 2 zinc fingers span residues 4355–4371 (CLYC…SGVC) and 4397–4410 (CNVC…GCNC). In terms of domain architecture, NiRAN spans 4426 to 4683 (FLNRVRGSSV…AAETHKDCDF (258 aa)). 2 residues coordinate Mn(2+): asparagine 4631 and aspartate 4640. Residues 4688 to 4786 (IEWPLLEYDY…MNMDFNIHRH (99 aa)) form the Nsp12 Interface domain. 5 residues coordinate Zn(2+): histidine 4717, cysteine 4723, cysteine 4728, cysteine 4732, and cysteine 4909. The 568-residue stretch at 4787–5354 (RLALKELMMY…DLYSSPTTLQ (568 aa)) folds into the Nsp12 RNA-dependent RNA polymerase domain. The rdRp Fingers N-ter stretch occupies residues 4789-5003 (ALKELMMYAA…HQKMLKSMAA (215 aa)). The rdRp Palm N-ter stretch occupies residues 5004 to 5042 (TRGATCVIGTTKFYGGWDFMLKTLYKDVESPHLMGWDYP). The RdRp catalytic domain maps to 5034–5196 (PHLMGWDYPK…CYNSDYAAKG (163 aa)). The segment at 5043–5101 (KCDRAMPNMCRILASLILARKHSTCCTNSDRFYRLANECAQVLSEYVLCGGGYYVKPGG) is rdRp Fingers C-ter. Zn(2+) contacts are provided by histidine 5064, cysteine 5067, and cysteine 5068. The interval 5102 to 5237 (TSSGDATTAY…EKGPHEFCSQ (136 aa)) is rdRp Palm C-ter. Active-site residues include serine 5181, aspartate 5182, and aspartate 5183. Residues 5238-5354 (HTLYIKDGDD…DLYSSPTTLQ (117 aa)) are rdRp Thumb. In terms of domain architecture, CV ZBD spans 5355–5467 (AVGSCVVCHS…MEFNRLATCD (113 aa)). Cysteine 5359, cysteine 5362, cysteine 5370, cysteine 5373, cysteine 5380, cysteine 5383, histidine 5387, histidine 5393, cysteine 5404, cysteine 5409, cysteine 5426, and histidine 5429 together coordinate Zn(2+). One can recognise a (+)RNA virus helicase ATP-binding domain in the interval 5611-5792 (TVPEEFANHV…MCNLGPDIFL (182 aa)). Residue 5636–5643 (GPPGTGKS) coordinates ATP. The 175-residue stretch at 5793–5967 (SVCYRCPKEI…GLFKDCSRED (175 aa)) folds into the (+)RNA virus helicase C-terminal domain. An ExoN domain is found at 6024–6239 (LFITRDEAIR…RCLAIYDCFI (216 aa)). Residues aspartate 6042, glutamate 6044, and glutamate 6143 contribute to the active site. Zn(2+) contacts are provided by cysteine 6159, cysteine 6162, cysteine 6178, histidine 6181, histidine 6209, cysteine 6213, and histidine 6216. Active-site residues include histidine 6220 and aspartate 6225. Cysteine 6231 serves as a coordination point for Zn(2+). An N7-MTase domain is found at 6248–6475 (YPYISHEQKL…NLWSTFVKVQ (228 aa)). S-adenosyl-L-methionine is bound at residue 6283–6289 (DIGNPKG). The tract at residues 6361-6375 (CNGGSLYVNKHAFHT) is gpppA-binding. Zn(2+) is bound by residues cysteine 6399, cysteine 6421, cysteine 6432, and histidine 6435. One can recognise a Nsp15 N-terminal oligomerization domain in the interval 6476 to 6536 (GLENIAFNVI…NVAFELYAKR (61 aa)). An AV-Nsp11N/CoV-Nsp15M domain is found at 6537–6658 (AVRSHPDLNL…LYKKVNNEFV (122 aa)). One can recognise a NendoU domain in the interval 6675-6814 (TVLTPMEEDF…RDGKVQTFYP (140 aa)). Residues histidine 6705, histidine 6720, lysine 6760, lysine 6863, aspartate 6947, lysine 6987, and glutamate 7020 contribute to the active site. Positions 6819-7113 (TNDWKPGLTM…TLNVSTDVLV (295 aa)) constitute a Nidovirus-type SAM-dependent 2'-O-MTase domain.

The protein belongs to the coronaviruses polyprotein 1ab family. In terms of assembly, interacts with host PHB and PHB2. Interacts with papain-like protease nsp3 and non-structural protein 6. As to quaternary structure, monomer. Homodimer. Only the homodimer shows catalytic activity. In terms of assembly, interacts with nsp8 and nsp12 to form the replication-transcription complex (RTC): nsp12, nsp7, two subunits of nsp8, and up to two subunits of nsp13. Interacts with nsp7, nsp13 and nsp12 to form the replication-transcription complex (RTC): nsp12, nsp7, two subunits of nsp8, and up to two subunits of nsp13. As to quaternary structure, interacts with nsp12. In terms of assembly, interacts with proofreading exoribonuclease nsp14 and 2'-O-methyltransferase nsp16; these interactions enhance nsp14 and nsp16 enzymatic activities. Interacts with nsp7 and nsp8 to form the replication-transcription complex (RTC): nsp12, nsp7, two subunits of nsp8, and up to two subunits of nsp13. Interacts with nsp9. As to quaternary structure, interacts with nsp8 to form the replication-transcription complex (RTC): nsp12, nsp7, two subunits of nsp8, and up to two subunits of nsp13. Mn(2+) serves as cofactor. The cofactor is Mg(2+). In terms of processing, specific enzymatic cleavages in vivo by its own proteases yield mature proteins. 3CL-PRO and PL-PRO proteinases are autocatalytically processed.

The protein localises to the host membrane. It is found in the host cytoplasm. It localises to the host perinuclear region. The protein resides in the host endoplasmic reticulum-Golgi intermediate compartment. The enzyme catalyses RNA(n) + a ribonucleoside 5'-triphosphate = RNA(n+1) + diphosphate. It catalyses the reaction ATP + H2O = ADP + phosphate + H(+). It carries out the reaction Thiol-dependent hydrolysis of ester, thioester, amide, peptide and isopeptide bonds formed by the C-terminal Gly of ubiquitin (a 76-residue protein attached to proteins as an intracellular targeting signal).. The catalysed reaction is a 5'-end (N(7)-methyl 5'-triphosphoguanosine)-ribonucleoside in mRNA + S-adenosyl-L-methionine = a 5'-end (N(7)-methyl 5'-triphosphoguanosine)-(2'-O-methyl-ribonucleoside) in mRNA + S-adenosyl-L-homocysteine + H(+). The enzyme catalyses uridylyl-uridylyl-ribonucleotide-RNA = a 3'-end uridylyl-2',3'-cyclophospho-uridine-RNA + a 5'-end dephospho-ribonucleoside-RNA. It catalyses the reaction a 5'-end diphospho-ribonucleoside in mRNA + GTP + H(+) = a 5'-end (5'-triphosphoguanosine)-ribonucleoside in mRNA + diphosphate. It carries out the reaction a 5'-end (5'-triphosphoguanosine)-ribonucleoside in mRNA + S-adenosyl-L-methionine = a 5'-end (N(7)-methyl 5'-triphosphoguanosine)-ribonucleoside in mRNA + S-adenosyl-L-homocysteine. Functionally, the replicase polyprotein of coronaviruses is a multifunctional protein: it contains the activities necessary for the transcription of negative stranded RNA, leader RNA, subgenomic mRNAs and progeny virion RNA as well as proteinases responsible for the cleavage of the polyprotein into functional products. In terms of biological role, inhibits host translation by interacting with the 40S ribosomal subunit. The nsp1-40S ribosome complex further induces an endonucleolytic cleavage near the 5'UTR of host mRNAs, targeting them for degradation. Viral mRNAs are not susceptible to nsp1-mediated endonucleolytic RNA cleavage thanks to the presence of a 5'-end leader sequence and are therefore protected from degradation. By suppressing host gene expression, nsp1 facilitates efficient viral gene expression in infected cells and evasion from host immune response. May play a role in the modulation of host cell survival signaling pathway by interacting with host PHB and PHB2. Indeed, these two proteins play a role in maintaining the functional integrity of the mitochondria and protecting cells from various stresses. Its function is as follows. Responsible for the cleavages located at the N-terminus of the replicase polyprotein. In addition, PL-PRO possesses a deubiquitinating/deISGylating activity and processes both 'Lys-48'- and 'Lys-63'-linked polyubiquitin chains from cellular substrates. Participates together with nsp4 in the assembly of virally-induced cytoplasmic double-membrane vesicles necessary for viral replication. Antagonizes innate immune induction of type I interferon by blocking the phosphorylation, dimerization and subsequent nuclear translocation of host IRF3. Also prevents host NF-kappa-B signaling. Functionally, participates in the assembly of virally-induced cytoplasmic double-membrane vesicles necessary for viral replication. In terms of biological role, cleaves the C-terminus of replicase polyprotein at 11 sites. Recognizes substrates containing the core sequence [ILMVF]-Q-|-[SGACN]. Also able to bind an ADP-ribose-1''-phosphate (ADRP). Plays a role in the initial induction of autophagosomes from host endoplasmic reticulum. Later, limits the expansion of these phagosomes that are no longer able to deliver viral components to lysosomes. Its function is as follows. Forms a hexadecamer with nsp8 (8 subunits of each) that may participate in viral replication by acting as a primase. Alternatively, may synthesize substantially longer products than oligonucleotide primers. Functionally, forms a hexadecamer with nsp7 (8 subunits of each) that may participate in viral replication by acting as a primase. Alternatively, may synthesize substantially longer products than oligonucleotide primers. In terms of biological role, forms a primer, NSP9-pU, which is utilized by the polymerase for the initiation of RNA chains. Interacts with ribosome signal recognition particle RNA (SRP). Together with NSP8, suppress protein integration into the cell membrane, thereby disrupting host immune defenses. Plays a pivotal role in viral transcription by stimulating both nsp14 3'-5' exoribonuclease and nsp16 2'-O-methyltransferase activities. Therefore plays an essential role in viral mRNAs cap methylation. Its function is as follows. RNA-directed RNA polymerase that catalyzes the transcription of viral genomic and subgenomic RNAs. Acts in complex with nsp7 and nsp8 to transcribe both the minus and positive strands of genomic RNA. The kinase-like NiRAN domain of NSP12 attaches one or more nucleotides to the amino terminus of NSP9, forming a covalent RNA-protein intermediate that serves as transcription/replication primer. Subgenomic RNAs (sgRNAs) are formed by discontinuous transcription: The polymerase has the ability to pause at transcription-regulating sequences (TRS) and jump to the leader TRS, resulting in a major deletion. This creates a series of subgenomic RNAs that are replicated, transcribed and translated. In addition, Nsp12 is a subunit of the viral RNA capping enzyme that catalyzes the RNA guanylyltransferase reaction for genomic and sub-genomic RNAs. Subsequently, the NiRAN domain transfers RNA to GDP, and forms the core cap structure GpppA-RNA. Functionally, RNA-directed RNA polymerase that catalyzes the transcription of viral genomic and subgenomic RNAs. Acts in complex with nsp7 and nsp8 to transcribe both the minus and positive strands of genomic RNA. Subgenomic RNAs (sgRNAs) are formed by discontinuous transcription: The polymerase has the ability to pause at transcription-regulating sequences (TRS) and jump to the leader TRS, resulting in a major deletion. This creates a series of subgenomic RNAs that are replicated, transcribed and translated. In addition, Nsp12 is a subunit of the viral RNA capping enzyme that catalyzes the RNA guanylyltransferase reaction for genomic and sub-genomic RNAs. The kinase-like NiRAN domain of NSP12 transfers RNA to the amino terminus of NSP9, forming a covalent RNA-protein intermediate. Subsequently, the NiRAN domain transfers RNA to GDP, and forms the core cap structure GpppA-RNA. In terms of biological role, multi-functional protein with a zinc-binding domain in N-terminus displaying RNA and DNA duplex-unwinding activities with 5' to 3' polarity. Activity of helicase is dependent on magnesium. Plays a role in viral RNA synthesis through two distinct activities. The N7-guanine methyltransferase activity plays a role in the formation of the cap structure GpppA-RNA. The proofreading exoribonuclease reduces the sensitivity of the virus to RNA mutagens during replication. This activity acts on both ssRNA and dsRNA in a 3'-5' direction. Its function is as follows. Plays a role in viral transcription/replication and prevents the simultaneous activation of host cell dsRNA sensors, such as MDA5/IFIH1, OAS, and PKR. Acts by degrading the 5'-polyuridines generated during replication of the poly(A) region of viral genomic and subgenomic RNAs. Catalyzes a two-step reaction in which a 2'3'-cyclic phosphate (2'3'-cP) is first generated by 2'-O transesterification, which is then hydrolyzed to a 3'-phosphate (3'-P). If not degraded, poly(U) RNA would hybridize with poly(A) RNA tails and activate host dsRNA sensors. Functionally, methyltransferase that mediates mRNA cap 2'-O-ribose methylation to the 5'-cap structure of viral mRNAs. N7-methyl guanosine cap is a prerequisite for binding of nsp16. Therefore plays an essential role in viral mRNAs cap methylation which is essential to evade immune system. In Tylonycteris pachypus (Lesser bamboo bat), this protein is Replicase polyprotein 1ab (rep).